The primary structure comprises 986 residues: Bifunctional glutamine synthetase adenylyltransferase/adenylyl-removing enzyme (986 aa).

The interval 1–473 (MTSSAPGNAD…HYARLFEGDP (473 aa)) is adenylyl removase. Residues 478–986 (SLPPVNYGAG…RRVFTALLER (509 aa)) form an adenylyl transferase region.

The protein belongs to the GlnE family. Mg(2+) is required as a cofactor.

It catalyses the reaction [glutamine synthetase]-O(4)-(5'-adenylyl)-L-tyrosine + phosphate = [glutamine synthetase]-L-tyrosine + ADP. The enzyme catalyses [glutamine synthetase]-L-tyrosine + ATP = [glutamine synthetase]-O(4)-(5'-adenylyl)-L-tyrosine + diphosphate. Involved in the regulation of glutamine synthetase GlnA, a key enzyme in the process to assimilate ammonia. When cellular nitrogen levels are high, the C-terminal adenylyl transferase (AT) inactivates GlnA by covalent transfer of an adenylyl group from ATP to specific tyrosine residue of GlnA, thus reducing its activity. Conversely, when nitrogen levels are low, the N-terminal adenylyl removase (AR) activates GlnA by removing the adenylyl group by phosphorolysis, increasing its activity. The regulatory region of GlnE binds the signal transduction protein PII (GlnB) which indicates the nitrogen status of the cell. This chain is Bifunctional glutamine synthetase adenylyltransferase/adenylyl-removing enzyme, found in Bradyrhizobium sp. (strain ORS 278).